We begin with the raw amino-acid sequence, 443 residues long: Mevalonate kinase (443 aa).

ATP contacts are provided by residues K12, S138, and 143-149 (GAGLGSS). Mg(2+) is bound by residues S149 and E191. The active-site Proton acceptor is the D202.

This sequence belongs to the GHMP kinase family. Mevalonate kinase subfamily. Homodimer. Requires Mg(2+) as cofactor.

The protein resides in the cytoplasm. Its subcellular location is the cytosol. It catalyses the reaction (R)-mevalonate + ATP = (R)-5-phosphomevalonate + ADP + H(+). Its pathway is isoprenoid biosynthesis; isopentenyl diphosphate biosynthesis via mevalonate pathway; isopentenyl diphosphate from (R)-mevalonate: step 1/3. Farnesyl pyrophosphate and geranyl pyrophosphate inhibit mevalonate kinase by binding competitively at the ATP-binding site. In terms of biological role, mevalonate kinase; part of the second module of ergosterol biosynthesis pathway that includes the middle steps of the pathway. ERG12 converts mevalonate into 5-phosphomevalonate. The second module is carried out in the vacuole and involves the formation of farnesyl diphosphate, which is also an important intermediate in the biosynthesis of ubiquinone, dolichol, heme and prenylated proteins. Activity by the mevalonate kinase ERG12 first converts mevalonate into 5-phosphomevalonate. 5-phosphomevalonate is then further converted to 5-diphosphomevalonate by the phosphomevalonate kinase ERG8. The diphosphomevalonate decarboxylase MVD1/ERG19 then produces isopentenyl diphosphate. The isopentenyl-diphosphate delta-isomerase IDI1 then catalyzes the 1,3-allylic rearrangement of the homoallylic substrate isopentenyl (IPP) to its highly electrophilic allylic isomer, dimethylallyl diphosphate (DMAPP). Finally the farnesyl diphosphate synthase ERG20 catalyzes the sequential condensation of isopentenyl pyrophosphate with dimethylallyl pyrophosphate, and then with the resultant geranylpyrophosphate to the ultimate product farnesyl pyrophosphate. The protein is Mevalonate kinase of Saccharomyces cerevisiae (strain ATCC 204508 / S288c) (Baker's yeast).